Here is a 703-residue protein sequence, read N- to C-terminus: Elongation factor G (703 aa).

Residues 9-292 (ERTRNIGIMA…AVVDYLPGPL (284 aa)) form the tr-type G domain. GTP is bound by residues 18 to 25 (AHIDAGKT), 91 to 95 (DTPGH), and 145 to 148 (NKMD).

It belongs to the TRAFAC class translation factor GTPase superfamily. Classic translation factor GTPase family. EF-G/EF-2 subfamily.

It is found in the cytoplasm. Functionally, catalyzes the GTP-dependent ribosomal translocation step during translation elongation. During this step, the ribosome changes from the pre-translocational (PRE) to the post-translocational (POST) state as the newly formed A-site-bound peptidyl-tRNA and P-site-bound deacylated tRNA move to the P and E sites, respectively. Catalyzes the coordinated movement of the two tRNA molecules, the mRNA and conformational changes in the ribosome. The chain is Elongation factor G from Leuconostoc mesenteroides subsp. mesenteroides (strain ATCC 8293 / DSM 20343 / BCRC 11652 / CCM 1803 / JCM 6124 / NCDO 523 / NBRC 100496 / NCIMB 8023 / NCTC 12954 / NRRL B-1118 / 37Y).